The primary structure comprises 154 residues: Myoglobin (154 aa).

One can recognise a Globin domain in the interval 2 to 148 (VLSDGEWQLV…FRKDIAAKYK (147 aa)). Phosphoserine is present on S4. H65 contacts nitrite. H65 serves as a coordination point for O2. T68 bears the Phosphothreonine mark. H94 contributes to the heme b binding site.

The protein belongs to the globin family. As to quaternary structure, monomeric.

Its subcellular location is the cytoplasm. It localises to the sarcoplasm. The catalysed reaction is Fe(III)-heme b-[protein] + nitric oxide + H2O = Fe(II)-heme b-[protein] + nitrite + 2 H(+). The enzyme catalyses H2O2 + AH2 = A + 2 H2O. Its function is as follows. Monomeric heme protein which primary function is to store oxygen and facilitate its diffusion within muscle tissues. Reversibly binds oxygen through a pentacoordinated heme iron and enables its timely and efficient release as needed during periods of heightened demand. Depending on the oxidative conditions of tissues and cells, and in addition to its ability to bind oxygen, it also has a nitrite reductase activity whereby it regulates the production of bioactive nitric oxide. Under stress conditions, like hypoxia and anoxia, it also protects cells against reactive oxygen species thanks to its pseudoperoxidase activity. This is Myoglobin from Balaena mysticetus (Bowhead whale).